A 347-amino-acid polypeptide reads, in one-letter code: Aspartate-semialdehyde dehydrogenase (347 aa).

NADP(+) is bound by residues 13-16 and 41-42; these read TGAV and RS. Arginine 101 provides a ligand contact to phosphate. Cysteine 132 acts as the Acyl-thioester intermediate in catalysis. Glutamine 159 lines the substrate pocket. 162-163 serves as a coordination point for NADP(+); the sequence is SG. Lysine 216 is a binding site for phosphate. Arginine 238 provides a ligand contact to substrate. The Proton acceptor role is filled by histidine 245. Position 319 (asparagine 319) interacts with NADP(+).

This sequence belongs to the aspartate-semialdehyde dehydrogenase family. In terms of assembly, homodimer.

It catalyses the reaction L-aspartate 4-semialdehyde + phosphate + NADP(+) = 4-phospho-L-aspartate + NADPH + H(+). Its pathway is amino-acid biosynthesis; L-lysine biosynthesis via DAP pathway; (S)-tetrahydrodipicolinate from L-aspartate: step 2/4. It participates in amino-acid biosynthesis; L-methionine biosynthesis via de novo pathway; L-homoserine from L-aspartate: step 2/3. It functions in the pathway amino-acid biosynthesis; L-threonine biosynthesis; L-threonine from L-aspartate: step 2/5. In terms of biological role, catalyzes the NADPH-dependent formation of L-aspartate-semialdehyde (L-ASA) by the reductive dephosphorylation of L-aspartyl-4-phosphate. The chain is Aspartate-semialdehyde dehydrogenase from Legionella pneumophila.